The primary structure comprises 111 residues: Large ribosomal subunit protein uL24 (111 aa).

The span at 48–65 (EKPSRSNREGGRTEREAP) shows a compositional bias: basic and acidic residues. The segment at 48–111 (EKPSRSNREG…AKTTGEELDD (64 aa)) is disordered. Positions 69–80 (SNVNPIDSNGES) are enriched in polar residues. The segment covering 86-95 (KKVEDPDTGR) has biased composition (basic and acidic residues).

This sequence belongs to the universal ribosomal protein uL24 family. As to quaternary structure, part of the 50S ribosomal subunit.

Functionally, one of two assembly initiator proteins, it binds directly to the 5'-end of the 23S rRNA, where it nucleates assembly of the 50S subunit. One of the proteins that surrounds the polypeptide exit tunnel on the outside of the subunit. The chain is Large ribosomal subunit protein uL24 from Salinibacter ruber (strain DSM 13855 / M31).